A 466-amino-acid chain; its full sequence is Integrin-linked protein kinase homolog pat-4 (466 aa).

ANK repeat units follow at residues 50–79 (HAFS…RVNS), 83–112 (GDDT…DVNA), and 116–145 (HGMT…AVNV). The 256-residue stretch at 210–465 (LNLITKIAES…QIIPILERMI (256 aa)) folds into the Protein kinase domain.

This sequence belongs to the protein kinase superfamily. TKL Ser/Thr protein kinase family. As to quaternary structure, interacts (via protein kinase domain) with unc-112 (via N-terminus). Interacts (via ANK repeats) with unc-97 (via first LIM domain). Interacts (via protein kinase domain) with pat-6 (via C-terminus CH domain). May form a complex with unc-112, unc-97 and pat-6. Does not interact with integrin pat-3. Component of an integrin containing attachment complex, composed of at least pat-2, pat-3, pat-4, pat-6, unc-52, unc-97 and unc-112. Expressed in body wall muscle.

The protein localises to the cytoplasm. It is found in the myofibril. Its subcellular location is the sarcomere. The protein resides in the m line. It localises to the basal cell membrane. Its function is as follows. Probable pseudokinase that acts as an adapter protein. Component of an integrin containing attachment complex, which is required for muscle development and maintenance. Involved in the assembly of dense bodies and M lines during body wall muscle development by recruiting several of their components including integrin pat-3, cpna-1, unc-89 and unc-112 to integrin-mediated attachment sites. Plays a role in distal tip cell (DTC) migration and in oocyte development probably by regulating the actin cytoskeleton. During the formation of neuromuscular junctions at the larval stage, negatively regulates membrane protrusion from body wall muscles. May be involved in thermotolerance and lifespan. The polypeptide is Integrin-linked protein kinase homolog pat-4 (Caenorhabditis elegans).